Consider the following 185-residue polypeptide: Ribosome-recycling factor (185 aa).

Belongs to the RRF family.

It localises to the cytoplasm. In terms of biological role, responsible for the release of ribosomes from messenger RNA at the termination of protein biosynthesis. May increase the efficiency of translation by recycling ribosomes from one round of translation to another. The chain is Ribosome-recycling factor from Haemophilus influenzae (strain 86-028NP).